We begin with the raw amino-acid sequence, 293 residues long: Diaminopimelate epimerase (293 aa).

Positions 17, 47, and 67 each coordinate substrate. C76 acts as the Proton donor in catalysis. Substrate-binding positions include 77 to 78, N164, N197, and 215 to 216; these read GN and ER. C224 serves as the catalytic Proton acceptor. 225 to 226 provides a ligand contact to substrate; that stretch reads GS.

The protein belongs to the diaminopimelate epimerase family. In terms of assembly, homodimer.

Its subcellular location is the cytoplasm. It catalyses the reaction (2S,6S)-2,6-diaminopimelate = meso-2,6-diaminopimelate. It participates in amino-acid biosynthesis; L-lysine biosynthesis via DAP pathway; DL-2,6-diaminopimelate from LL-2,6-diaminopimelate: step 1/1. In terms of biological role, catalyzes the stereoinversion of LL-2,6-diaminopimelate (L,L-DAP) to meso-diaminopimelate (meso-DAP), a precursor of L-lysine and an essential component of the bacterial peptidoglycan. The chain is Diaminopimelate epimerase from Rhodopseudomonas palustris (strain ATCC BAA-98 / CGA009).